A 396-amino-acid chain; its full sequence is CCA-adding enzyme (396 aa).

Residues Gly32 and Arg35 each coordinate ATP. CTP is bound by residues Gly32 and Arg35. Positions 45 and 47 each coordinate Mg(2+). Arg116, Asp159, Arg162, Arg165, and Arg168 together coordinate ATP. The CTP site is built by Arg116, Asp159, Arg162, Arg165, and Arg168.

Belongs to the tRNA nucleotidyltransferase/poly(A) polymerase family. Bacterial CCA-adding enzyme type 3 subfamily. Homodimer. It depends on Mg(2+) as a cofactor.

It catalyses the reaction a tRNA precursor + 2 CTP + ATP = a tRNA with a 3' CCA end + 3 diphosphate. The catalysed reaction is a tRNA with a 3' CCA end + 2 CTP + ATP = a tRNA with a 3' CCACCA end + 3 diphosphate. Functionally, catalyzes the addition and repair of the essential 3'-terminal CCA sequence in tRNAs without using a nucleic acid template. Adds these three nucleotides in the order of C, C, and A to the tRNA nucleotide-73, using CTP and ATP as substrates and producing inorganic pyrophosphate. tRNA 3'-terminal CCA addition is required both for tRNA processing and repair. Also involved in tRNA surveillance by mediating tandem CCA addition to generate a CCACCA at the 3' terminus of unstable tRNAs. While stable tRNAs receive only 3'-terminal CCA, unstable tRNAs are marked with CCACCA and rapidly degraded. The sequence is that of CCA-adding enzyme from Lactobacillus delbrueckii subsp. bulgaricus (strain ATCC BAA-365 / Lb-18).